The chain runs to 860 residues: Protein argonaute-2 (860 aa).

Y2 carries the post-translational modification 3'-nitrotyrosine. The 120-residue stretch at 230-349 folds into the PAZ domain; the sequence is PVIEFVCEVL…LPLEVCNIVA (120 aa). The interaction with guide RNA stretch occupies residues 312 to 317; that stretch reads YFKDRH. A Phosphoserine modification is found at S388. One can recognise a Piwi domain in the interval 518–819; the sequence is LVVVILPGKT…VAFRARYHLV (302 aa). The interaction with guide RNA stretch occupies residues 525–567; that stretch reads GKTPVYAEVKRVGDTVLGMATQCVQMKNVQRTTPQTLSNLCLK. An interaction with GW182 family members region spans residues 588 to 591; sequence FQQP. D598 lines the a divalent metal cation pocket. An interaction with GW182 family members region spans residues 651–661; the sequence is LIQFYKSTRFK. D670 contributes to the a divalent metal cation binding site. A 4-hydroxyproline modification is found at P701. 3 interaction with guide RNA regions span residues 710 to 711, 754 to 762, and 791 to 813; these read KR, HAGIQGTSR, and YVRC…VAFR. Residue H808 coordinates a divalent metal cation. Phosphoserine occurs at positions 825, 829, 832, and 835.

The protein belongs to the argonaute family. Ago subfamily. In terms of assembly, interacts with DICER1 through its Piwi domain and with TARBP2 during assembly of the RNA-induced silencing complex (RISC). Together, DICER1, AGO2 and TARBP2 constitute the trimeric RISC loading complex (RLC), or micro-RNA (miRNA) loading complex (miRLC). Within the RLC/miRLC, DICER1 and TARBP2 are required to process precursor miRNAs (pre-miRNAs) to mature miRNAs and then load them onto AGO2. AGO2 bound to the mature miRNA constitutes the minimal RISC and may subsequently dissociate from DICER1 and TARBP2. Note however that the term RISC has also been used to describe the trimeric RLC/miRLC. The formation of RISC complexes containing siRNAs rather than miRNAs appears to occur independently of DICER1. Interacts with AGO1. Also interacts with DDB1, DDX5, DDX6, DDX20, DHX30, DHX36, DDX47, DHX9, ELAVL, FXR1, GEMIN4, HNRNPF, IGF2BP1, ILF3, IMP8, MATR3, PABPC1, PRMT5, P4HA1, P4HB, RBM4, SART3, TNRC6A, TNRC6B, UPF1 and YBX1. Interacts with the P-body components DCP1A and XRN1. Associates with polysomes and messenger ribonucleoproteins (mNRPs). Interacts with RBM4; the interaction is modulated under stress-induced conditions, occurs under both cell proliferation and differentiation conditions and in an RNA- and phosphorylation-independent manner. Interacts with LIMD1, WTIP and AJUBA. Interacts with TRIM71. Interacts with APOBEC3G in an RNA-dependent manner. Interacts with APOBEC3A, APOBEC3C, APOBEC3F and APOBEC3H. Interacts with DICER1, TARBP2, EIF6, MOV10 and RPL7A (60S ribosome subunit); they form a large RNA-induced silencing complex (RISC). Interacts with FMR1. Interacts with ZFP36. Interacts with RC3H1; the interaction is RNA independent. Interacts with ARB2A. Found in a complex composed of AGO2, CHD7 and ARB2A. Interacts with SND1 and SYT11. Interacts with CLNK. Interacts with GARRE1. Interacts with GRB2; this interaction is important for the formation of a ternary complex containing GRB2, AGO2 and DICER1. Requires Mg(2+) as cofactor. Mn(2+) serves as cofactor. In terms of processing, hydroxylated. 4-hydroxylation appears to enhance protein stability but is not required for miRNA-binding or endonuclease activity. Ubiquitinated on surface-exposed lysines by a SCF-like E3 ubiquitin-protein ligase complex containing ZSWIM8 during target-directed microRNA degradation (TDMD), a process that mediates degradation of microRNAs (miRNAs). Ubiquitination by the SCF-like E3 ubiquitin-protein ligase complex containing ZSWIM8 leads to its subsequent degradation, thereby exposing miRNAs for degradation. ZSWIM8 recognizes and binds AGO2 when it is engaged with a TDMD target. Post-translationally, phosphorylation at Ser-388 by AKT3; leads to up-regulate translational repression of microRNA target and down-regulate endonucleolytic cleavage. In terms of processing, a phosphorylation cycle of C-terminal serine cluster (Ser-825-Ser-835) regulates the release of target mRNAs. Target-binding leads to phosphorylation of these residues by CSNK1A1, which reduces the affinity of AGO2 for mRNA and enables target release. The ANKRD52-PPP6C phosphatase complex dephosphorylates the residues, which primes AGO2 for binding a new target. As to expression, ubiquitous expression in 9.5 day embryos with highest levels in forebrain, heart, limb buds, and branchial arches.

It is found in the cytoplasm. The protein localises to the P-body. The protein resides in the nucleus. It catalyses the reaction Endonucleolytic cleavage to 5'-phosphomonoester.. Required for RNA-mediated gene silencing (RNAi) by the RNA-induced silencing complex (RISC). The 'minimal RISC' appears to include AGO2 bound to a short guide RNA such as a microRNA (miRNA) or short interfering RNA (siRNA). These guide RNAs direct RISC to complementary mRNAs that are targets for RISC-mediated gene silencing. The precise mechanism of gene silencing depends on the degree of complementarity between the miRNA or siRNA and its target. Binding of RISC to a perfectly complementary mRNA generally results in silencing due to endonucleolytic cleavage of the mRNA specifically by AGO2. Binding of RISC to a partially complementary mRNA results in silencing through inhibition of translation, and this is independent of endonuclease activity. May inhibit translation initiation by binding to the 7-methylguanosine cap, thereby preventing the recruitment of the translation initiation factor eIF4-E. May also inhibit translation initiation via interaction with EIF6, which itself binds to the 60S ribosomal subunit and prevents its association with the 40S ribosomal subunit. The inhibition of translational initiation leads to the accumulation of the affected mRNA in cytoplasmic processing bodies (P-bodies), where mRNA degradation may subsequently occur. In some cases RISC-mediated translational repression is also observed for miRNAs that perfectly match the 3' untranslated region (3'-UTR). Can also up-regulate the translation of specific mRNAs under certain growth conditions. Binds to the AU element of the 3'-UTR of the TNF (TNF-alpha) mRNA and up-regulates translation under conditions of serum starvation. Also required for transcriptional gene silencing (TGS), in which short RNAs known as antigene RNAs or agRNAs direct the transcriptional repression of complementary promoter regions. Regulates lymphoid and erythroid development and function, and this is independent of endonuclease activity. The chain is Protein argonaute-2 (Ago2) from Mus musculus (Mouse).